The primary structure comprises 3351 residues: Apolipophorins (3351 aa).

Positions 1–25 are cleaved as a signal peptide; the sequence is MARMKYNIALIGILASVLLTIAVNA. The 599-residue stretch at 43–641 folds into the Vitellogenin domain; that stretch reads YIPGNYYDYS…SQHGFLPRSS (599 aa). 7 N-linked (GlcNAc...) asparagine glycosylation sites follow: Asn67, Asn644, Asn1514, Asn1744, Asn1932, Asn1979, and Asn2822. One can recognise a VWFD domain in the interval 2786–2952; that stretch reads LRGHVVDGKH…DYGVGKCTAI (167 aa).

In terms of assembly, interacts with Nrx-1 (via cytoplasmic domain); the interaction supports apolpp/ApoLI protein stability. In terms of processing, may be modified covalently by lipidation. Cleaved into 2 chains by furin protease. However, prevention of cleavage does not impair its function. In terms of tissue distribution, during stage 12, it is highly present throughout the yolk sac. By late stage 14, it localizes in the lateral fat body cells. Starting at stage 14, it localizes to the apodemes. Component of hemolymph clots (at protein level). Expressed in the amniosera. Expressed in rhabdomere of photoreceptor cells in retina (at protein level). Expressed in rhabdomere of photoreceptor cells in retina (at protein level). As to expression, expressed in simper cells as well as interphotoreceptor matrix (at protein level).

It is found in the secreted. The protein localises to the cell projection. It localises to the rhabdomere. Its function is as follows. Constitutes the major component of lipophorin, which mediates transport for various types of lipids in hemolymph. Acts by forming lipoprotein particles that bind lipoproteins and lipids. Also involved in the transport of hydrophobic ligands like juvenile hormones, pheromone hydrocarbons and carotenoids. Required for morphogens wingless (wg) and hedgehog (hh) function, probably by acting as vehicles for the movement of wg and hh, explaining how covalently lipidated wg and hh can spread over long distances. May also be involved in transport and/or metabolism of heme. Involved in yolk granule formation. May be a component of yolk incorporated into yolk granules via yl/yolkless-mediated endocytosis and the endolysosomal pathway. This is Apolipophorins from Drosophila melanogaster (Fruit fly).